Consider the following 115-residue polypeptide: Envelope glycoprotein N (115 aa).

A signal peptide spans 1–27 (MWLLRPAGSNFIVALIVLACAGPLTCS). The Virion surface segment spans residues 28-77 (AQLDAGILNPWGSAGHNDAVMPGMFANSESDERFYSPHCSSRGLPLVNES). A helical membrane pass occupies residues 78-98 (MASVIFFLSLAMVCVAIVAIL). At 99–115 (YNCCFNSFKNSVINSRW) the chain is on the intravirion side.

This sequence belongs to the herpesviridae glycoprotein N family. As to quaternary structure, interacts (via N-terminus) with gM (via N-terminus). The gM-gN heterodimer forms the gCII complex.

The protein localises to the virion membrane. It is found in the host membrane. The protein resides in the host Golgi apparatus. It localises to the host trans-Golgi network. Functionally, envelope glycoprotein necessary for proper maturation of gM and modulation of its membrane fusion activity. Also plays a critical role in virion morphogenesis. The chain is Envelope glycoprotein N from Psittacid herpesvirus 1 (isolate Amazon parrot/-/97-0001/1997) (PsHV-1).